A 469-amino-acid polypeptide reads, in one-letter code: Serine/threonine-protein kinases PknA (469 aa).

A Protein kinase domain is found at 20–281; the sequence is YRLQWIIGHG…NEMALAVSAV (262 aa). ATP contacts are provided by residues 26–34 and Lys49; that span reads IGHGGMSTV. Asp148 (proton acceptor) is an active-site residue. Disordered stretches follow at residues 286-307 and 359-454; these read RPPQPRTSAMMAQAEAPSPSES and FNDT…PADD. 2 stretches are compositionally biased toward low complexity: residues 365–384 and 399–413; these read ETTTPETITETYTPTVEETT and TEPETTSHRPTTSEE. The span at 430–443 shows a compositional bias: polar residues; sequence VPQIPTSTPRTSAS.

This sequence belongs to the protein kinase superfamily. Ser/Thr protein kinase family.

The enzyme catalyses L-seryl-[protein] + ATP = O-phospho-L-seryl-[protein] + ADP + H(+). It catalyses the reaction L-threonyl-[protein] + ATP = O-phospho-L-threonyl-[protein] + ADP + H(+). The protein is Serine/threonine-protein kinases PknA (pknA) of Corynebacterium glutamicum (strain ATCC 13032 / DSM 20300 / JCM 1318 / BCRC 11384 / CCUG 27702 / LMG 3730 / NBRC 12168 / NCIMB 10025 / NRRL B-2784 / 534).